The following is a 450-amino-acid chain: Phosphoglucosamine mutase (450 aa).

Serine 102 acts as the Phosphoserine intermediate in catalysis. Positions 102, 242, 244, and 246 each coordinate Mg(2+). Serine 102 carries the post-translational modification Phosphoserine.

This sequence belongs to the phosphohexose mutase family. Mg(2+) is required as a cofactor. In terms of processing, activated by phosphorylation.

It catalyses the reaction alpha-D-glucosamine 1-phosphate = D-glucosamine 6-phosphate. In terms of biological role, catalyzes the conversion of glucosamine-6-phosphate to glucosamine-1-phosphate. This is Phosphoglucosamine mutase from Lachnospira eligens (strain ATCC 27750 / DSM 3376 / VPI C15-48 / C15-B4) (Eubacterium eligens).